The sequence spans 329 residues: Malate dehydrogenase (329 aa).

Position 12-18 (12-18) interacts with NAD(+); it reads GAAGQIG. Substrate contacts are provided by Arg-93 and Arg-99. NAD(+) contacts are provided by residues Asn-106, Gln-113, and 130–132; that span reads TGN. Residues Asn-132 and Arg-163 each contribute to the substrate site. His-188 acts as the Proton acceptor in catalysis.

Belongs to the LDH/MDH superfamily. MDH type 2 family.

The enzyme catalyses (S)-malate + NAD(+) = oxaloacetate + NADH + H(+). Its function is as follows. Catalyzes the reversible oxidation of malate to oxaloacetate. This Mycobacterium ulcerans (strain Agy99) protein is Malate dehydrogenase.